A 505-amino-acid chain; its full sequence is L-arabinose isomerase (505 aa).

The Mn(2+) site is built by glutamate 310, glutamate 337, histidine 354, and histidine 453.

Belongs to the arabinose isomerase family. Mn(2+) is required as a cofactor.

The enzyme catalyses beta-L-arabinopyranose = L-ribulose. It participates in carbohydrate degradation; L-arabinose degradation via L-ribulose; D-xylulose 5-phosphate from L-arabinose (bacterial route): step 1/3. In terms of biological role, catalyzes the conversion of L-arabinose to L-ribulose. In Clavibacter sepedonicus (Clavibacter michiganensis subsp. sepedonicus), this protein is L-arabinose isomerase.